Reading from the N-terminus, the 321-residue chain is Probable endolytic peptidoglycan transglycosylase RlpA (321 aa).

This sequence belongs to the RlpA family.

Its function is as follows. Lytic transglycosylase with a strong preference for naked glycan strands that lack stem peptides. In Synechocystis sp. (strain ATCC 27184 / PCC 6803 / Kazusa), this protein is Probable endolytic peptidoglycan transglycosylase RlpA.